We begin with the raw amino-acid sequence, 213 residues long: MRLPLFDDIGERSLWTFENLVSRNGFHAVAGVDEAGRGPLAGPVVAAAVILPQGAELPGVDDSKKLSAPKREHLFGLISGCALAVGVGVADHACIDRINILQATLRAMAEAVGQLAVPPDYLLIDGISTIPLNLPQKTIKKGDSSSISIASASIVAKVTRDRMMMEYDQQFPGYGFAEHKGYGCASHLAAIAELGPCPIHRKTFRGVKEHVAP.

In terms of domain architecture, RNase H type-2 spans 27 to 213; the sequence is HAVAGVDEAG…FRGVKEHVAP (187 aa). A divalent metal cation-binding residues include aspartate 33, glutamate 34, and aspartate 125.

This sequence belongs to the RNase HII family. Mn(2+) is required as a cofactor. The cofactor is Mg(2+).

The protein localises to the cytoplasm. The enzyme catalyses Endonucleolytic cleavage to 5'-phosphomonoester.. In terms of biological role, endonuclease that specifically degrades the RNA of RNA-DNA hybrids. This is Ribonuclease HII from Geobacter metallireducens (strain ATCC 53774 / DSM 7210 / GS-15).